The primary structure comprises 192 residues: MPVSDSLSPDLPNDDTSEEWLEVGTIVGAHGLNGEVKVYPDSDFPERFTQPGLRWLVSPTEASTPEEIQLIRGRFVERKGIYVVKLANVNFRDQSEALKGTKLLVRSNDRPTLAEGEYYLSDLIGVTVVDHQTQAVVGSVVSLASAGNDLLEIQLDNTTKTILLPFVSALVPIVDIATKRIEITPPKGLIPE.

The PRC barrel domain occupies 115-189 (EGEYYLSDLI…RIEITPPKGL (75 aa)).

The protein belongs to the RimM family. Binds ribosomal protein uS19.

Its subcellular location is the cytoplasm. Its function is as follows. An accessory protein needed during the final step in the assembly of 30S ribosomal subunit, possibly for assembly of the head region. Essential for efficient processing of 16S rRNA. May be needed both before and after RbfA during the maturation of 16S rRNA. It has affinity for free ribosomal 30S subunits but not for 70S ribosomes. In Acaryochloris marina (strain MBIC 11017), this protein is Ribosome maturation factor RimM.